Reading from the N-terminus, the 462-residue chain is Integrator complex subunit 12 (462 aa).

The interval Gly-42–Val-132 is disordered. Polar residues predominate over residues Ile-59–Val-86. Lys-68 is covalently cross-linked (Glycyl lysine isopeptide (Lys-Gly) (interchain with G-Cter in SUMO2)). Residues Thr-88–Glu-124 show a composition bias toward basic and acidic residues. Position 128 is a phosphoserine (Ser-128). A PHD-type zinc finger spans residues Gly-159–Gln-215. Lys-254 participates in a covalent cross-link: Glycyl lysine isopeptide (Lys-Gly) (interchain with G-Cter in SUMO2). Polar residues predominate over residues Ser-301–Gln-328. The interval Ser-301–Lys-462 is disordered. 2 stretches are compositionally biased toward low complexity: residues Lys-347–Val-358 and Val-382–Ser-437. Over residues Gln-449–Lys-462 the composition is skewed to basic residues.

Belongs to the Integrator subunit 12 family. As to quaternary structure, component of the Integrator complex, composed of core subunits INTS1, INTS2, INTS3, INTS4, INTS5, INTS6, INTS7, INTS8, INTS9/RC74, INTS10, INTS11/CPSF3L, INTS12, INTS13, INTS14 and INTS15. The core complex associates with protein phosphatase 2A subunits PPP2CA and PPP2R1A, to form the Integrator-PP2A (INTAC) complex. In terms of processing, dephosphorylated at Ser-128 by the PNUTS-PP1 complex, promoting RNA polymerase II transcription pause-release.

It is found in the nucleus. Functionally, component of the integrator complex, a multiprotein complex that terminates RNA polymerase II (Pol II) transcription in the promoter-proximal region of genes. The integrator complex provides a quality checkpoint during transcription elongation by driving premature transcription termination of transcripts that are unfavorably configured for transcriptional elongation: the complex terminates transcription by (1) catalyzing dephosphorylation of the C-terminal domain (CTD) of Pol II subunit POLR2A/RPB1 and SUPT5H/SPT5, (2) degrading the exiting nascent RNA transcript via endonuclease activity and (3) promoting the release of Pol II from bound DNA. The integrator complex is also involved in terminating the synthesis of non-coding Pol II transcripts, such as enhancer RNAs (eRNAs), small nuclear RNAs (snRNAs), telomerase RNAs and long non-coding RNAs (lncRNAs). Mediates recruitment of cytoplasmic dynein to the nuclear envelope, probably as component of the integrator complex. The sequence is that of Integrator complex subunit 12 (INTS12) from Pongo abelii (Sumatran orangutan).